The sequence spans 220 residues: Deep-sea actinoporin Cjtox I (220 aa).

Residues 1-19 (MNRLIILCLVAATIYSTIA) form the signal peptide. A propeptide spanning residues 20 to 42 (LPMKEDISNEERPTSVNEKPVKK) is cleaved from the precursor. Residues serine 96, valine 128, serine 146, proline 148, tyrosine 174, tyrosine 178, and tyrosine 179 each coordinate phosphocholine. The interval 146–161 (SVPYDYNWYSNWWNIK) is trp-rich region, which is important for the binding to lipid membrane. A Cell attachment site, crucial for protein stability motif is present at residues 185–187 (KGN).

Belongs to the actinoporin family. Sea anemone subfamily. Octamer or nonamer in membranes. Monomer in the soluble state. Expressed in tentacles.

It is found in the secreted. Its subcellular location is the nematocyst. The protein localises to the target cell membrane. Probably acts in predation. Pore-forming protein that forms cations-selective hydrophilic pores of around 1 nm and causes cytolysis. Pore formation is a multi-step process that involves specific recognition of membrane sphingomyelin (but neither cholesterol nor phosphatidylcholine) using aromatic rich region and adjacent phosphocholine (POC) binding site, firm binding to the membrane (mainly driven by hydrophobic interactions) accompanied by the transfer of the N-terminal region to the lipid-water interface and finally pore formation after oligomerization of monomers. Shows hemolytic activity on equine erythrocytes. Hemolysis is moderately inhibited in presence of sphingomyelin, suggesting that this protein targets sphingomyelin. This is Deep-sea actinoporin Cjtox I from Cribrinopsis japonica (Deep-sea anemone).